A 298-amino-acid chain; its full sequence is ADP/ATP translocase 2 (298 aa).

M1 carries the N-acetylmethionine modification. Residues 1–7 are Mitochondrial intermembrane-facing; that stretch reads MTDAAVS. T2 carries the post-translational modification N-acetylthreonine; in ADP/ATP translocase 2, N-terminally processed. The Solcar 1 repeat unit spans residues 6 to 98; that stretch reads VSFAKDFLAG…FAFKDKYKQI (93 aa). S7 is subject to Phosphoserine. The helical transmembrane segment at 8-37 threads the bilayer; the sequence is FAKDFLAGGVAAAISKTAVAPIERVKLLLQ. N6-malonyllysine is present on K23. Residues 38-74 lie on the Mitochondrial matrix side of the membrane; it reads VQHASKQITADKQYKGIMDCVVRIPKEQGVLSFWRGN. Residue K43 is modified to N6-succinyllysine. N6,N6,N6-trimethyllysine; alternate is present on K52. Residue K52 is modified to N6,N6-dimethyllysine; alternate. Residue K52 is modified to N6-methyllysine; alternate. The chain crosses the membrane as a helical span at residues 75–99; it reads LANVIRYFPTQALNFAFKDKYKQIF. R80 and K92 together coordinate ADP. K92 and K96 each carry N6-malonyllysine. Residues 100-109 lie on the Mitochondrial intermembrane side of the membrane; sequence LGGVDKRTQF. At K105 the chain carries N6-acetyllysine; alternate. Position 105 is an N6-succinyllysine; alternate (K105). The chain crosses the membrane as a helical span at residues 110–130; sequence WRYFAGNLASGGAAGATSLCF. 2 Solcar repeats span residues 111–201 and 212–297; these read RYFA…AKGM and ISWM…IKKY. The Mitochondrial matrix segment spans residues 131–178; it reads VYPLDFARTRLAADVGKAGDAREFKGLGDCLVKITKSDGIRGLYQGFN. The residue at position 147 (K147) is an N6-methyllysine; alternate. 2 positions are modified to N6-acetyllysine; alternate: K147 and K155. K147 and K155 each carry N6-succinyllysine; alternate. K147 is subject to N6-malonyllysine; alternate. Residues K163 and K166 each carry the N6-acetyllysine modification. A helical transmembrane segment spans residues 179–199; the sequence is VSVQGIIIYRAAYFGIYDTAK. The Mitochondrial intermembrane portion of the chain corresponds to 200-210; the sequence is GMLPDPKNTHI. A helical membrane pass occupies residues 211-231; that stretch reads FISWMIAQSVTAVAGLTSYPF. Over 232-273 the chain is Mitochondrial matrix; it reads DTVRRRMMMQSGRKGSDIMYTGTIDCWKKIARDEGSKAFFKG. R235 serves as a coordination point for ADP. Residues 235-240 are important for transport activity; that stretch reads RRRMMM. A Nucleotide carrier signature motif motif is present at residues 235–240; that stretch reads RRRMMM. Position 268 is an N6-acetyllysine; alternate (K268). K268 bears the N6-succinyllysine; alternate mark. Residues 274-291 traverse the membrane as a helical segment; sequence AWSNVLRGMGGAFVLVLY. The Mitochondrial intermembrane segment spans residues 292–298; that stretch reads DEIKKYT.

This sequence belongs to the mitochondrial carrier (TC 2.A.29) family. In terms of assembly, monomer. Component of the MMXD complex, which includes CIAO1, ERCC2, CIAO2B, MMS19 and SLC25A5/ANT2. Interacts with AK4. Interacts with TIMM44; leading to inhibit the presequence translocase TIMM23, thereby promoting stabilization of PINK1. Post-translationally, trimethylated by ANTKMT at Lys-52.

It localises to the mitochondrion inner membrane. It is found in the membrane. The catalysed reaction is ADP(in) + ATP(out) = ADP(out) + ATP(in). It catalyses the reaction H(+)(in) = H(+)(out). The matrix-open state (m-state) is inhibited by the membrane-permeable bongkrekic acid (BKA). The cytoplasmic-open state (c-state) is inhibited by the membrane-impermeable toxic inhibitor carboxyatractyloside (CATR). Proton transporter activity is inhibited by ADP:ATP antiporter activity. Its function is as follows. ADP:ATP antiporter that mediates import of ADP into the mitochondrial matrix for ATP synthesis, and export of ATP out to fuel the cell. Cycles between the cytoplasmic-open state (c-state) and the matrix-open state (m-state): operates by the alternating access mechanism with a single substrate-binding site intermittently exposed to either the cytosolic (c-state) or matrix (m-state) side of the inner mitochondrial membrane. In addition to its ADP:ATP antiporter activity, also involved in mitochondrial uncoupling and mitochondrial permeability transition pore (mPTP) activity. Plays a role in mitochondrial uncoupling by acting as a proton transporter: proton transport uncouples the proton flows via the electron transport chain and ATP synthase to reduce the efficiency of ATP production and cause mitochondrial thermogenesis. Proton transporter activity is inhibited by ADP:ATP antiporter activity, suggesting that SLC25A5/ANT2 acts as a master regulator of mitochondrial energy output by maintaining a delicate balance between ATP production (ADP:ATP antiporter activity) and thermogenesis (proton transporter activity). Proton transporter activity requires free fatty acids as cofactor, but does not transport it. Probably mediates mitochondrial uncoupling in tissues that do not express UCP1. Also plays a key role in mPTP opening, a non-specific pore that enables free passage of the mitochondrial membranes to solutes of up to 1.5 kDa, and which contributes to cell death. It is however unclear if SLC25A5/ANT2 constitutes a pore-forming component of mPTP or regulates it. Acts as a regulator of mitophagy independently of ADP:ATP antiporter activity: promotes mitophagy via interaction with TIMM44, leading to inhibit the presequence translocase TIMM23, thereby promoting stabilization of PINK1. As part of the mitotic spindle-associated MMXD complex it may play a role in chromosome segregation. The chain is ADP/ATP translocase 2 from Tachyglossus aculeatus aculeatus (Southeast Australian short-beaked echidna).